Consider the following 495-residue polypeptide: uncharacterized protein (495 aa).

A CHY-type zinc finger spans residues 389–457 (PLPNNGACEH…KDATCPHCGN (69 aa)). Cys-396, His-398, Cys-410, Cys-411, Cys-417, Cys-420, His-421, His-427, Cys-437, Cys-440, Cys-452, and Cys-455 together coordinate Zn(2+). Basic and acidic residues predominate over residues 473 to 483 (GMRDRVRMSRK). The disordered stretch occupies residues 473–495 (GMRDRVRMSRKDPRKYKRKHHGN). The segment covering 484–495 (DPRKYKRKHHGN) has biased composition (basic residues).

The protein resides in the cytoplasm. This is an uncharacterized protein from Schizosaccharomyces pombe (strain 972 / ATCC 24843) (Fission yeast).